The primary structure comprises 126 residues: Large ribosomal subunit protein bL19 (126 aa).

Belongs to the bacterial ribosomal protein bL19 family.

Functionally, this protein is located at the 30S-50S ribosomal subunit interface and may play a role in the structure and function of the aminoacyl-tRNA binding site. The polypeptide is Large ribosomal subunit protein bL19 (Albidiferax ferrireducens (strain ATCC BAA-621 / DSM 15236 / T118) (Rhodoferax ferrireducens)).